The following is an 84-amino-acid chain: Toxin Aah4 (84 aa).

A signal peptide spans 1 to 19 (MNYLIMFSLALLLVIGVES). Residues 21–82 (RDGYIVDSKN…PIKDPSDDCH (62 aa)) enclose the LCN-type CS-alpha/beta domain. 4 cysteine pairs are disulfide-bonded: Cys-31-Cys-81, Cys-35-Cys-53, Cys-39-Cys-63, and Cys-43-Cys-65. A propeptide (removed by a carboxypeptidase) is located at residue Arg-84.

Belongs to the long (4 C-C) scorpion toxin superfamily. Sodium channel inhibitor family. Alpha subfamily. In terms of tissue distribution, expressed by the venom gland.

The protein localises to the secreted. In terms of biological role, alpha toxins bind voltage-independently at site-3 of sodium channels (Nav) and inhibit the inactivation of the activated channels, thereby blocking neuronal transmission. This toxin seems to specifically act on Nav1.6/SCN8A sodium channel. In vitro, it inhibits the proliferation of the prostate cancer cell line DU145 (IC(50)=15 uM). It shows low effect on the adhesion of DU145 cells to fibronectin (at 15 uM) and is inactive on DU145 cells migration. This is Toxin Aah4 from Androctonus australis (Sahara scorpion).